We begin with the raw amino-acid sequence, 146 residues long: Cytochrome c-556 (146 aa).

Residues 1-24 (MCMKLKTITAAMLFGCLCAGAVYA) form the signal peptide. Heme c-binding residues include methionine 35, cysteine 135, cysteine 138, and histidine 139.

In terms of assembly, monomer. Binds 1 heme c group covalently per subunit.

Its function is as follows. Low-spin monoheme cytochrome c. The polypeptide is Cytochrome c-556 (Agrobacterium fabrum (strain C58 / ATCC 33970) (Agrobacterium tumefaciens (strain C58))).